The chain runs to 227 residues: Enolase-phosphatase E1 (227 aa).

Belongs to the HAD-like hydrolase superfamily. MasA/MtnC family. In terms of assembly, monomer. Requires Mg(2+) as cofactor.

The enzyme catalyses 5-methylsulfanyl-2,3-dioxopentyl phosphate + H2O = 1,2-dihydroxy-5-(methylsulfanyl)pent-1-en-3-one + phosphate. It functions in the pathway amino-acid biosynthesis; L-methionine biosynthesis via salvage pathway; L-methionine from S-methyl-5-thio-alpha-D-ribose 1-phosphate: step 3/6. It participates in amino-acid biosynthesis; L-methionine biosynthesis via salvage pathway; L-methionine from S-methyl-5-thio-alpha-D-ribose 1-phosphate: step 4/6. Its function is as follows. Bifunctional enzyme that catalyzes the enolization of 2,3-diketo-5-methylthiopentyl-1-phosphate (DK-MTP-1-P) into the intermediate 2-hydroxy-3-keto-5-methylthiopentenyl-1-phosphate (HK-MTPenyl-1-P), which is then dephosphorylated to form the acireductone 1,2-dihydroxy-3-keto-5-methylthiopentene (DHK-MTPene). The sequence is that of Enolase-phosphatase E1 from Pseudomonas syringae pv. tomato (strain ATCC BAA-871 / DC3000).